Consider the following 1071-residue polypeptide: Ubiquitin carboxyl-terminal hydrolase 7 (1071 aa).

The disordered stretch occupies residues 467–532; it reads KARLQQEQQQ…MPTTPEIPPP (66 aa). Residues 471-480 are compositionally biased toward low complexity; that stretch reads QQEQQQQQQQ. Residues 481–495 show a composition bias toward polar residues; sequence PDSQDSFSAKESSTK. Composition is skewed to pro residues over residues 497–507 and 516–532; these read PEPPSWKPPDL and PPPP…IPPP. In terms of domain architecture, USP spans 609–1069; the sequence is TGLRNLGNTC…DVYVLFYERV (461 aa). The active-site Nucleophile is the Cys-618. The interval 913–942 is disordered; sequence RMLGGSGKRSSSSTPFSTGGNDSNNSSDYK. Polar residues predominate over residues 920 to 932; the sequence is KRSSSSTPFSTGG. His-1014 serves as the catalytic Proton acceptor.

This sequence belongs to the peptidase C19 family.

The protein resides in the cytoplasm. It catalyses the reaction Thiol-dependent hydrolysis of ester, thioester, amide, peptide and isopeptide bonds formed by the C-terminal Gly of ubiquitin (a 76-residue protein attached to proteins as an intracellular targeting signal).. Its function is as follows. Involved in the sorting of ubiquitinated cargo proteins at the multivesicular body (MVB). The protein is Ubiquitin carboxyl-terminal hydrolase 7 (UBP7) of Saccharomyces cerevisiae (strain ATCC 204508 / S288c) (Baker's yeast).